Here is a 488-residue protein sequence, read N- to C-terminus: Acetyl-coenzyme A carboxylase carboxyl transferase subunit beta, chloroplastic (488 aa).

The 268-residue stretch at 221–488 folds into the CoA carboxyltransferase N-terminal domain; it reads LWIQCDNCYA…FFPLNKNEIK (268 aa). 4 residues coordinate Zn(2+): C225, C228, C244, and C247. The C4-type zinc finger occupies 225–247; that stretch reads CDNCYALIYKKALKLKLNVCEQC.

This sequence belongs to the AccD/PCCB family. In terms of assembly, acetyl-CoA carboxylase is a heterohexamer composed of biotin carboxyl carrier protein, biotin carboxylase and 2 subunits each of ACCase subunit alpha and ACCase plastid-coded subunit beta (accD). Zn(2+) serves as cofactor.

The protein resides in the plastid. The protein localises to the chloroplast stroma. It catalyses the reaction N(6)-carboxybiotinyl-L-lysyl-[protein] + acetyl-CoA = N(6)-biotinyl-L-lysyl-[protein] + malonyl-CoA. Its pathway is lipid metabolism; malonyl-CoA biosynthesis; malonyl-CoA from acetyl-CoA: step 1/1. Its function is as follows. Component of the acetyl coenzyme A carboxylase (ACC) complex. Biotin carboxylase (BC) catalyzes the carboxylation of biotin on its carrier protein (BCCP) and then the CO(2) group is transferred by the transcarboxylase to acetyl-CoA to form malonyl-CoA. This is Acetyl-coenzyme A carboxylase carboxyl transferase subunit beta, chloroplastic from Aethionema grandiflorum (Persian stone-cress).